The chain runs to 450 residues: Benzene 1,2-dioxygenase subunit alpha (450 aa).

One can recognise a Rieske domain in the interval 54 to 163 (WLLLGHETQI…VETYKGLIFA (110 aa)). Residues cysteine 96, histidine 98, cysteine 116, and histidine 119 each coordinate [2Fe-2S] cluster. Residues histidine 222 and histidine 228 each contribute to the Fe cation site.

The protein belongs to the bacterial ring-hydroxylating dioxygenase alpha subunit family. As to quaternary structure, this dioxygenase system consists of four proteins: the two subunits of the hydroxylase component (BnzA and BnzB), a ferredoxin (BnzC) and a ferredoxin reductase (BnzD). [2Fe-2S] cluster is required as a cofactor. The cofactor is Fe cation.

The enzyme catalyses benzene + NADH + O2 + H(+) = cis-1,2-dihydrobenzene-1,2-diol + NAD(+). The catalysed reaction is toluene + NADH + O2 + H(+) = (1S,2R)-3-methylcyclohexa-3,5-diene-1,2-diol + NAD(+). It participates in aromatic compound metabolism; benzene degradation; catechol from benzene: step 1/2. It functions in the pathway xenobiotic degradation; toluene degradation. Its pathway is xenobiotic degradation; xylene degradation. Its function is as follows. Catalyzes both the oxidation of benzene and toluene. The sequence is that of Benzene 1,2-dioxygenase subunit alpha (bnzA) from Pseudomonas putida (strain ATCC 700007 / DSM 6899 / JCM 31910 / BCRC 17059 / LMG 24140 / F1).